The chain runs to 260 residues: RNA polymerase sigma-G factor (260 aa).

Residues 1-71 (MSRNKVEICG…GEYVDDLFQV (71 aa)) form a recognizes anti-sigma-G factor Gin (csfB) region. The Polymerase core binding motif lies at 67-80 (DLFQVGCIGLMKSI). The H-T-H motif DNA-binding region spans 229–248 (QMEVAEEIGISQAQVSRLEK).

It belongs to the sigma-70 factor family. As to quaternary structure, interacts with anti-sigma-G factor Gin (csfB).

Activity repressed by anti-sigma-G factor Gin (csfB) and Lon protease during the early stages of forespore development. When both Gin and sigma-G are expressed in E.coli Gin inhibits sigma-G activity, strongly suggesting Gin inhibits by direct physical interaction. Sigma factors are initiation factors that promote the attachment of RNA polymerase to specific initiation sites and are then released. This sigma factor is responsible for the expression of sporulation specific genes in the forespore. The polypeptide is RNA polymerase sigma-G factor (sigG) (Bacillus subtilis (strain 168)).